An 88-amino-acid chain; its full sequence is MAFAQSGGAGGGGGQRRPFFRRRKTCPFSGPNAPKIDYKDVRLLQRYISERGKIVPSRITAVSAKKQRELSAAIKRSRFLGLLPFVIR.

A disordered region spans residues methionine 1–cysteine 26.

This sequence belongs to the bacterial ribosomal protein bS18 family. As to quaternary structure, part of the 30S ribosomal subunit. Forms a tight heterodimer with protein bS6.

Functionally, binds as a heterodimer with protein bS6 to the central domain of the 16S rRNA, where it helps stabilize the platform of the 30S subunit. The sequence is that of Small ribosomal subunit protein bS18 from Xanthobacter autotrophicus (strain ATCC BAA-1158 / Py2).